The sequence spans 242 residues: uncharacterized protein (242 aa).

Positions 3-116 constitute a Response regulatory domain; the sequence is TALVIDDEPF…RLRKTVKRLS (114 aa). Aspartate 54 bears the 4-aspartylphosphate mark. An HTH LytTR-type domain is found at 139 to 240; that stretch reads IPCIGHNRIV…LKLLKEMLGL (102 aa).

This is an uncharacterized protein from Vibrio vulnificus (strain CMCP6).